We begin with the raw amino-acid sequence, 578 residues long: Membrane protein insertase YidC (578 aa).

Residues 7–27 (FLAIAISLGILLGFQGLYRHF) traverse the membrane as a helical segment. The segment at 35 to 70 (ARTATNAGQGKPNNTLGAVPTDATASQSPPPKEGAR) is disordered. The span at 37 to 50 (TATNAGQGKPNNTL) shows a compositional bias: polar residues. The next 4 membrane-spanning stretches (helical) occupy residues 362–382 (LVGN…AAFY), 436–456 (LPML…FVTI), 491–511 (HISP…TMYL), and 530–550 (FMPI…VIYW).

The protein belongs to the OXA1/ALB3/YidC family. Type 1 subfamily. In terms of assembly, interacts with the Sec translocase complex via SecD. Specifically interacts with transmembrane segments of nascent integral membrane proteins during membrane integration.

It is found in the cell inner membrane. Its function is as follows. Required for the insertion and/or proper folding and/or complex formation of integral membrane proteins into the membrane. Involved in integration of membrane proteins that insert both dependently and independently of the Sec translocase complex, as well as at least some lipoproteins. Aids folding of multispanning membrane proteins. The polypeptide is Membrane protein insertase YidC (Granulibacter bethesdensis (strain ATCC BAA-1260 / CGDNIH1)).